A 777-amino-acid chain; its full sequence is DnaJ homolog subfamily C member 16 (777 aa).

Positions 1–23 (MELGRAGPAGLLLLLLLLLAAQA) are cleaved as a signal peptide. The Cytoplasmic portion of the chain corresponds to 24-531 (APERDPYRVL…DSLFHSNWRE (508 aa)). A J domain is found at 28–92 (DPYRVLGVGR…EKRANFDRYG (65 aa)). A Thioredoxin domain is found at 117-243 (FDESFFHFPF…LRQFVENLLP (127 aa)). The helical; Anchor for type IV membrane protein transmembrane segment at 532 to 552 (MMPLLSLLFSALFILFGTVIV) threads the bilayer. Over 553–777 (QAFSDSSDTR…FYIPSWPALD (225 aa)) the chain is Extracellular. The interval 558–589 (SSDTRDSPASEKKDTTAKTEKNDTSFNKESNS) is disordered. Positions 559–580 (SDTRDSPASEKKDTTAKTEKND) are enriched in basic and acidic residues. The N-linked (GlcNAc...) asparagine glycan is linked to asparagine 627.

It localises to the endoplasmic reticulum membrane. Plays an important role in regulating the size of autophagosomes during the formation process. This is DnaJ homolog subfamily C member 16 (DNAJC16) from Gallus gallus (Chicken).